Consider the following 189-residue polypeptide: GTPase NRas (189 aa).

GTP is bound by residues 10–18 (GAGGVGKSA) and 29–30 (VD). The Effector region motif lies at 32-40 (YDPTIEDSY). 57–61 (DTAGQ) serves as a coordination point for GTP. Serine 89 carries the phosphoserine modification. 116–119 (NKCD) serves as a coordination point for GTP. The segment at 166 to 185 (YRLKKLNSSDDGTQGCMGSP) is hypervariable region. Lysine 170 participates in a covalent cross-link: Glycyl lysine isopeptide (Lys-Gly) (interchain with G-Cter in ubiquitin). Cysteine 181 carries S-palmitoyl cysteine lipidation. The S-farnesyl cysteine moiety is linked to residue cysteine 186. The propeptide at 187-189 (VLM) is removed in mature form.

The protein belongs to the small GTPase superfamily. Ras family. As to quaternary structure, interacts (active GTP-bound form preferentially) with RGS14. Interacts (active GTP-bound form) with RASSF7. Interacts (active GTP-bound form) with both SHOC2 and PP1c (all isoforms) to form a tertiary complex; SHOC2 and PP1c preferably bind M-Ras/MRAS, but they also bind K-Ras/KRAS, N-Ras/NRAS and H-Ras/HRAS. Palmitoylated by the ZDHHC9-GOLGA7 complex. Depalmitoylated by ABHD17A, ABHD17B and ABHD17C. A continuous cycle of de- and re-palmitoylation regulates rapid exchange between plasma membrane and Golgi. In terms of processing, acetylation at Lys-104 prevents interaction with guanine nucleotide exchange factors (GEFs). Post-translationally, ubiquitinated by the BCR(LZTR1) E3 ubiquitin ligase complex at Lys-170 in a non-degradative manner, leading to inhibit Ras signaling by decreasing Ras association with membranes. Phosphorylation at Ser-89 enhances NRAS association with its downstream effectors.

The protein resides in the cell membrane. The protein localises to the golgi apparatus membrane. The catalysed reaction is GTP + H2O = GDP + phosphate + H(+). Its activity is regulated as follows. Alternates between an inactive form bound to GDP and an active form bound to GTP. Activated by a guanine nucleotide-exchange factor (GEF) and inactivated by a GTPase-activating protein (GAP). Its function is as follows. Ras proteins bind GDP/GTP and possess intrinsic GTPase activity. The polypeptide is GTPase NRas (Nras) (Mus musculus (Mouse)).